The sequence spans 293 residues: tRNA-cytidine(32) 2-sulfurtransferase (293 aa).

The short motif at 62–67 is the PP-loop motif element; sequence SGGKDS. [4Fe-4S] cluster-binding residues include Cys-137, Cys-140, and Cys-228.

This sequence belongs to the TtcA family. Homodimer. The cofactor is Mg(2+). It depends on [4Fe-4S] cluster as a cofactor.

It localises to the cytoplasm. The catalysed reaction is cytidine(32) in tRNA + S-sulfanyl-L-cysteinyl-[cysteine desulfurase] + AH2 + ATP = 2-thiocytidine(32) in tRNA + L-cysteinyl-[cysteine desulfurase] + A + AMP + diphosphate + H(+). It participates in tRNA modification. Functionally, catalyzes the ATP-dependent 2-thiolation of cytidine in position 32 of tRNA, to form 2-thiocytidine (s(2)C32). The sulfur atoms are provided by the cysteine/cysteine desulfurase (IscS) system. The chain is tRNA-cytidine(32) 2-sulfurtransferase from Brucella abortus (strain S19).